We begin with the raw amino-acid sequence, 63 residues long: UPF0370 protein PC1_1167 (63 aa).

The chain crosses the membrane as a helical span at residues 3–23; it reads WLADYWWIILIILIGMLINGI. Residues 37-63 are disordered; the sequence is NKPKLPPHRDNNDKWDDEDDDWPKKKP.

It belongs to the UPF0370 family.

It localises to the cell membrane. This is UPF0370 protein PC1_1167 from Pectobacterium carotovorum subsp. carotovorum (strain PC1).